The sequence spans 933 residues: Bifunctional uridylyltransferase/uridylyl-removing enzyme (933 aa).

A uridylyltransferase region spans residues methionine 1–aspartate 390. The segment at valine 391–threonine 745 is uridylyl-removing. The region spanning valine 506–leucine 628 is the HD domain. ACT domains are found at residues glutamate 746–lysine 829 and valine 859–alanine 933.

Belongs to the GlnD family. Mg(2+) is required as a cofactor.

It carries out the reaction [protein-PII]-L-tyrosine + UTP = [protein-PII]-uridylyl-L-tyrosine + diphosphate. It catalyses the reaction [protein-PII]-uridylyl-L-tyrosine + H2O = [protein-PII]-L-tyrosine + UMP + H(+). With respect to regulation, uridylyltransferase (UTase) activity is inhibited by glutamine, while glutamine activates uridylyl-removing (UR) activity. Uridylylation process is dependent on ATP and 2-oxoglutarate, which are effector molecules that likely bind to PII proteins and control their activity. Modifies, by uridylylation and deuridylylation, the PII regulatory proteins GlnB and GlnZ, in response to the nitrogen status of the cell that GlnD senses through the glutamine level. Under low glutamine levels, catalyzes the conversion of the PII proteins and UTP to PII-UMP and PPi, while under higher glutamine levels, GlnD hydrolyzes PII-UMP to PII and UMP (deuridylylation). Thus, controls uridylylation state and activity of the PII proteins, and plays an important role in the regulation of nitrogen fixation and metabolism. This Azospirillum brasilense protein is Bifunctional uridylyltransferase/uridylyl-removing enzyme.